A 1308-amino-acid polypeptide reads, in one-letter code: D-lysergyl-peptide-synthetase subunit 2 (1308 aa).

The segment at 261–658 is adenylation (A) domain; sequence EWCRRTPSAV…CRKSTQVKLR (398 aa). The 69-residue stretch at 803–871 folds into the Carrier domain; that stretch reads IEEAFQRFFA…ELSELARHTK (69 aa). Position 835 is an O-(pantetheine 4'-phosphoryl)serine (S835). Residues 910–1299 are condensation (C) domain; the sequence is EDVYPCTPLQ…HAAPRTLIGD (390 aa).

The protein belongs to the NRP synthetase family.

It participates in alkaloid biosynthesis; ergot alkaloid biosynthesis. In terms of biological role, D-lysergyl-peptide-synthetase subunit 2; part of the gene cluster that mediates the biosynthesis of fungal ergot alkaloid. DmaW catalyzes the first step of ergot alkaloid biosynthesis by condensing dimethylallyl diphosphate (DMAP) and tryptophan to form 4-dimethylallyl-L-tryptophan. The second step is catalyzed by the methyltransferase easF that methylates 4-dimethylallyl-L-tryptophan in the presence of S-adenosyl-L-methionine, resulting in the formation of 4-dimethylallyl-L-abrine. The catalase easC and the FAD-dependent oxidoreductase easE then transform 4-dimethylallyl-L-abrine to chanoclavine-I which is further oxidized by EasD in the presence of NAD(+), resulting in the formation of chanoclavine-I aldehyde. Agroclavine dehydrogenase easG then mediates the conversion of chanoclavine-I aldehyde to agroclavine via a non-enzymatic adduct reaction: the substrate is an iminium intermediate that is formed spontaneously from chanoclavine-I aldehyde in the presence of glutathione. The presence of easA is not required to complete this reaction. Further conversion of agroclavine to paspalic acid is a two-step process involving oxidation of agroclavine to elymoclavine and of elymoclavine to paspalic acid, the second step being performed by the elymoclavine oxidase cloA. Paspalic acid is then further converted to D-lysergic acid. Ergopeptines are assembled from D-lysergic acid and three different amino acids by the D-lysergyl-peptide-synthetases composed each of a monomudular and a trimodular nonribosomal peptide synthetase subunit. LpsB and lpsC encode the monomodular subunits responsible for D-lysergic acid activation and incorporation into the ergopeptine backbone. LpsA1 and A2 subunits encode the trimodular nonribosomal peptide synthetase assembling the tripeptide portion of ergopeptines. LpsA1 is responsible for formation of the major ergopeptine, ergotamine, and lpsA2 for alpha-ergocryptine, the minor ergopeptine of the total alkaloid mixture elaborated by C.purpurea. D-lysergyl-tripeptides are assembled by the nonribosomal peptide synthetases and released as N-(D-lysergyl-aminoacyl)-lactams. Cyclolization of the D-lysergyl-tripeptides is performed by the Fe(2+)/2-ketoglutarate-dependent dioxygenase easH which introduces a hydroxyl group into N-(D-lysergyl-aminoacyl)-lactam at alpha-C of the aminoacyl residue followed by spontaneous condensation with the terminal lactam carbonyl group. This chain is D-lysergyl-peptide-synthetase subunit 2, found in Claviceps purpurea (Ergot fungus).